The chain runs to 218 residues: Small ribosomal subunit protein uS3 (218 aa).

Residues 38 to 106 form the KH type-2 domain; it reads IRKYIESKLA…RVHINIVEIK (69 aa).

This sequence belongs to the universal ribosomal protein uS3 family. In terms of assembly, part of the 30S ribosomal subunit. Forms a tight complex with proteins S10 and S14.

Binds the lower part of the 30S subunit head. Binds mRNA in the 70S ribosome, positioning it for translation. This Ligilactobacillus salivarius (strain UCC118) (Lactobacillus salivarius) protein is Small ribosomal subunit protein uS3.